A 124-amino-acid chain; its full sequence is Protein YobA (124 aa).

The signal sequence occupies residues M1–A26. 2 residues coordinate Cu cation: H27 and H113.

Belongs to the CopC family.

Its subcellular location is the periplasm. The protein is Protein YobA (yobA) of Escherichia coli O6:H1 (strain CFT073 / ATCC 700928 / UPEC).